Reading from the N-terminus, the 436-residue chain is Transcription factor MYB124 (436 aa).

Residues 1-11 (MEDTKKKKKKN) are compositionally biased toward basic residues. The disordered stretch occupies residues 1–23 (MEDTKKKKKKNINNNQDSKKKER). The short motif at 8–15 (KKKNINNN) is the Nuclear localization signal 1 element. HTH myb-type domains are found at residues 20 to 71 (KKER…YTYL) and 72 to 126 (NSDF…KKRA). 2 consecutive DNA-binding regions (H-T-H motif) follow at residues 48–71 (WAII…YTYL) and 99–122 (WTEI…TTLC). Residues 151–158 (PRKSENET) carry the Nuclear localization signal 2 motif. The disordered stretch occupies residues 309–328 (SWRQPDLHDSPASSEYSSGS). Residues 319–328 (PASSEYSSGS) are compositionally biased toward polar residues.

As to quaternary structure, interacts with RBR1. As to expression, expressed in all shoot organs with higher levels in leaves, stems, flowers, siliques and floral buds. Also detected in roots tips.

It is found in the nucleus. Functionally, transcription factor that binds to DNA in promoters cis-regulatory element 5'-GGCGCGC-3' of cell cycle genes, including cyclins, cyclin-dependent kinases (CDKs), and components of the pre-replication complex. Binds to DNA in promoters cis-regulatory element 5'-AGCCG-3' of auxin regulated genes (e.g. PIN3 and PIN7). Together with FAMA and MYB88, ensures that stomata contain just two guard cells (GCs) by enforcing a single symmetric precursor cell division before stomatal maturity. Represses the expression of the mitosis-inducing factors CDKB1-1 and CDKA-1, specifically required for the last guard mother cells (GMC) symmetric divisions in the stomatal pathway. Represses CYCA2-3 in newly formed guard cells. Together with MYB88, regulates stomata spacing by restricting divisions late in the stomatal cell lineage thus limiting the number of GMC divisions. In collaboration with CDKB1-1 and CDKB1-2, restrict the G1/S transition and chloroplast and nuclear number during stomatal formation, and normally maintain fate and developmental progression throughout the stomatal cell lineage. Also involved in the shape regulation of pavement cells. Involved in sensing and/or transducing abiotic stress (e.g. drought and salt), probably via the positive regulation of NAC019. Regulates female reproduction being required for entry into megasporogenesis, probably via the regulation of cell cycle genes. Promotes histone H3K27me3 marks and represses stem cell gene expression. Required for lateral roots (LRs) initiation via the regulation of PIN3 expression in an auxin-dependent manner. Involved in responses to gravity stimulation in primary roots by regulating the transcription of PIN3 and PIN7 in gravity-sensing cells, thus modulating auxin asymmetric redistribution. The polypeptide is Transcription factor MYB124 (Arabidopsis thaliana (Mouse-ear cress)).